Consider the following 130-residue polypeptide: uncharacterized protein (130 aa).

The disordered stretch occupies residues 48–130; that stretch reads RGYWPQGPPP…LIAAMEEDER (83 aa). Positions 80-107 are enriched in gly residues; sequence GGDGGGDAGAGPSGVAGTAAGGAGGDGA.

This is an uncharacterized protein from Aotus trivirgatus (Three-striped night monkey).